A 258-amino-acid polypeptide reads, in one-letter code: MKISQIEKKKHLYLIKLDNGDSLTVTEDTIVTFMLSKHMVIDSQQWEDIKSFAQFSYGKSKALGFIAFQQRSQKQVQDYLLKHQISPDLIPSIIDSLKQGKWIDDQQYVDTYIRQNSLTGDKGPLLLKQKLMLKGIASQLIEPVLAQTDFSSIAQKAAEKIYQKYQHKLPSKALTDKIIQGLLNKGFSYDLAKGIVSQLSLEQDSQHIEDLLDQEFDKLLRKYSRRYDGYQLKQKLYQALYRKGYDSDDITTKLNDYF.

It belongs to the RecX family.

It is found in the cytoplasm. Modulates RecA activity. The polypeptide is Regulatory protein RecX (Streptococcus equi subsp. equi (strain 4047)).